Here is a 472-residue protein sequence, read N- to C-terminus: MSSGTLYDKVWDLHRVAELPGGSTQLFVGLHLIHEVTSPQAFAALRDKGLSVRCPERTVATVDHIVPTTSQSRPFADSLAEEMLSTLERNCADHGITLNGIGSGRQGIVHVIAPELGLTQPGMTVACGDSHTSTHGAFGAIAFGIGTSQVRDVLASQSLAMSKLKVRRIQVNGRLSDGVSAKDLILHVIRTLGVKGGVGFAYEFAGPAVEALSMEERMTLCNMAIEGGARCGYVNPDQVTFDYLSGRAGAPSGAAWDRAVSWWRGLASDPDAVVDDEVVFDAASIAPTVTWGITPGQGLGIDECIPQLEQLEPGERPIAEEAYRYMDLQPGTAIAGVPVDVCFIGSCTNGRLSDLRAAAAVARGRHVADGIKAFVVPGSEQVAKAAEAEGLDRVFQDAGFEWREPGCSMCLAMNPDRLEGRQISASSSNRNFKGRQGSASGRTLLMSPAMVAAAAVHGQVTDVRTLSLQSAV.

[4Fe-4S] cluster is bound by residues Cys347, Cys407, and Cys410.

Belongs to the aconitase/IPM isomerase family. LeuC type 1 subfamily. As to quaternary structure, heterodimer of LeuC and LeuD. It depends on [4Fe-4S] cluster as a cofactor.

The enzyme catalyses (2R,3S)-3-isopropylmalate = (2S)-2-isopropylmalate. The protein operates within amino-acid biosynthesis; L-leucine biosynthesis; L-leucine from 3-methyl-2-oxobutanoate: step 2/4. Catalyzes the isomerization between 2-isopropylmalate and 3-isopropylmalate, via the formation of 2-isopropylmaleate. The polypeptide is 3-isopropylmalate dehydratase large subunit (Parasynechococcus marenigrum (strain WH8102)).